Consider the following 400-residue polypeptide: Nicotinate phosphoribosyltransferase (400 aa).

His220 is modified (phosphohistidine; by autocatalysis).

This sequence belongs to the NAPRTase family. Transiently phosphorylated on a His residue during the reaction cycle. Phosphorylation strongly increases the affinity for substrates and increases the rate of nicotinate D-ribonucleotide production. Dephosphorylation regenerates the low-affinity form of the enzyme, leading to product release.

The enzyme catalyses nicotinate + 5-phospho-alpha-D-ribose 1-diphosphate + ATP + H2O = nicotinate beta-D-ribonucleotide + ADP + phosphate + diphosphate. The protein operates within cofactor biosynthesis; NAD(+) biosynthesis; nicotinate D-ribonucleotide from nicotinate: step 1/1. In terms of biological role, catalyzes the synthesis of beta-nicotinate D-ribonucleotide from nicotinate and 5-phospho-D-ribose 1-phosphate at the expense of ATP. The polypeptide is Nicotinate phosphoribosyltransferase (Escherichia coli O17:K52:H18 (strain UMN026 / ExPEC)).